Here is a 142-residue protein sequence, read N- to C-terminus: 3-hydroxyacyl-[acyl-carrier-protein] dehydratase FabZ (142 aa).

The active site involves His49.

Belongs to the thioester dehydratase family. FabZ subfamily.

The protein resides in the cytoplasm. The catalysed reaction is a (3R)-hydroxyacyl-[ACP] = a (2E)-enoyl-[ACP] + H2O. Functionally, involved in unsaturated fatty acids biosynthesis. Catalyzes the dehydration of short chain beta-hydroxyacyl-ACPs and long chain saturated and unsaturated beta-hydroxyacyl-ACPs. This is 3-hydroxyacyl-[acyl-carrier-protein] dehydratase FabZ from Deinococcus geothermalis (strain DSM 11300 / CIP 105573 / AG-3a).